The following is a 120-amino-acid chain: MRSWIPLLVLFAVLAVFAQAGKSSESDESRRRPSKSSESSDSDSKSSDSDSSSSEESSGDVPSEAPNTDSTPVEILAAAKPDSGILLGPGDNRVKRDGLPSFYDIRKKRGLPSAYDIRRK.

Residues 1–18 (MRSWIPLLVLFAVLAVFA) form the signal peptide. A disordered region spans residues 20–99 (AGKSSESDES…GDNRVKRDGL (80 aa)).

This is an uncharacterized protein from Caenorhabditis elegans.